A 149-amino-acid chain; its full sequence is UPF0306 protein PM1958 (149 aa).

This sequence belongs to the UPF0306 family.

This is UPF0306 protein PM1958 from Pasteurella multocida (strain Pm70).